Consider the following 464-residue polypeptide: GDNF family receptor alpha-2 (464 aa).

Positions 1 to 21 (MILANVFCLFFFLDETLRSLA) are cleaved as a signal peptide. 14 disulfide bridges follow: Cys-40-Cys-93, Cys-47-Cys-53, Cys-63-Cys-78, Cys-95-Cys-105, Cys-161-Cys-222, Cys-168-Cys-174, Cys-185-Cys-200, Cys-195-Cys-241, Cys-224-Cys-229, Cys-251-Cys-323, Cys-258-Cys-264, Cys-275-Cys-293, Cys-285-Cys-347, and Cys-325-Cys-335. Asn-52 carries an N-linked (GlcNAc...) asparagine glycan. Residues Asn-357 and Asn-413 are each glycosylated (N-linked (GlcNAc...) asparagine). Ser-444 carries the GPI-anchor amidated serine lipid modification. A propeptide spans 445–464 (RARPSAALTVLSVLMLKLAL) (removed in mature form).

It belongs to the GDNFR family. In terms of assembly, interacts with NRTN ligand and RET: forms a 2:2:2 ternary complex composed of NRTN ligand, GFRA2 and RET receptor. Also forms a 4:4:4 tetrameric complex composed of 4 copies of NRTN ligand, GFRA2 and RET receptor, which prevents endocytosis of RET. Interacts with SORL1.

The protein localises to the cell membrane. Functionally, receptor for neurturin (NRTN), a growth factor that supports the survival of sympathetic neurons. NRTN-binding leads to autophosphorylation and activation of the RET receptor. Also able to mediate GDNF signaling through the RET tyrosine kinase receptor. This Pongo abelii (Sumatran orangutan) protein is GDNF family receptor alpha-2 (GFRA2).